A 189-amino-acid chain; its full sequence is Glycerol-3-phosphate acyltransferase (189 aa).

The next 5 helical transmembrane spans lie at 1–21 (MFWL…AILL), 51–71 (LAIL…LIAS), 77–97 (LQDQ…PLYF), 111–131 (MLLG…LLTF), and 151–171 (LLAW…LLIV).

Belongs to the PlsY family. Probably interacts with PlsX.

The protein localises to the cell inner membrane. It carries out the reaction an acyl phosphate + sn-glycerol 3-phosphate = a 1-acyl-sn-glycero-3-phosphate + phosphate. It participates in lipid metabolism; phospholipid metabolism. Catalyzes the transfer of an acyl group from acyl-phosphate (acyl-PO(4)) to glycerol-3-phosphate (G3P) to form lysophosphatidic acid (LPA). This enzyme utilizes acyl-phosphate as fatty acyl donor, but not acyl-CoA or acyl-ACP. The chain is Glycerol-3-phosphate acyltransferase from Pseudomonas fluorescens (strain Pf0-1).